The sequence spans 515 residues: Alpha-1B adrenergic receptor (515 aa).

Topologically, residues 1–45 are extracellular; that stretch reads MNPDLDTGHNTSAPAHWGELKDDNFTGPNQTSSNSTLPQLDVTRA. N-linked (GlcNAc...) asparagine glycans are attached at residues asparagine 10, asparagine 24, and asparagine 34. The chain crosses the membrane as a helical span at residues 46–70; that stretch reads ISVGLVLGAFILFAIVGNILVILSV. Over 71 to 83 the chain is Cytoplasmic; it reads ACNRHLRTPTNYF. The helical transmembrane segment at 84–105 threads the bilayer; sequence IVNLAIADLLLSFTVLPFSATL. Residues 106–115 are Extracellular-facing; it reads EVLGYWVLGR. Residues 116-141 form a helical membrane-spanning segment; that stretch reads IFCDIWAAVDVLCCTASILSLCAISI. A disulfide bridge connects residues cysteine 118 and cysteine 195. At 142-161 the chain is on the cytoplasmic side; sequence DRYIGVRYSLQYPTLVTRRK. The chain crosses the membrane as a helical span at residues 162 to 182; that stretch reads AILALLSVWVLSTVISIGPLL. Topologically, residues 183-201 are extracellular; sequence GWKEPAPNDDKECGVTEEP. Residues 202 to 224 form a helical membrane-spanning segment; sequence FYALFSSLGSFYIPLAVILVMYC. At 225–295 the chain is on the cytoplasmic side; sequence RVYIVAKRTT…FSREKKAAKT (71 aa). A Phosphothreonine modification is found at threonine 264. The helical transmembrane segment at 296–319 threads the bilayer; it reads LGIVVGMFILCWLPFFIALPLGSL. The Extracellular segment spans residues 320 to 326; it reads FSTLKPP. The helical transmembrane segment at 327–351 threads the bilayer; the sequence is DAVFKVVFWLGYFNSCLNPIIYPCS. Residues 352-515 are Cytoplasmic-facing; that stretch reads SKEFKRAFMR…SNMPLAPGHF (164 aa). The S-palmitoyl cysteine moiety is linked to residue cysteine 365. The Nuclear localization signal motif lies at 368–378; sequence RGGRRRRRRRR. Disordered stretches follow at residues 392 to 430 and 474 to 515; these read GGSLERSQSRKDSLDDSGSCMSGTQRTLPSASPSPGYLG and LGDP…PGHF. Polar residues-rich tracts occupy residues 410 to 424 and 484 to 498; these read SCMSGTQRTLPSASP and GDTSNGGCDTTTDLA.

The protein belongs to the G-protein coupled receptor 1 family. Adrenergic receptor subfamily. ADRA1B sub-subfamily. Homo- and heterooligomer. Heterooligomerizes with ADRA1B homooligomers in cardiac myocytes. Interacts with CAVIN4.

It is found in the nucleus membrane. It localises to the cell membrane. The protein localises to the cytoplasm. The protein resides in the membrane. Its subcellular location is the caveola. This alpha-adrenergic receptor mediates its action by association with G proteins that activate a phosphatidylinositol-calcium second messenger system. Its effect is mediated by G(q) and G(11) proteins. Nuclear ADRA1A-ADRA1B heterooligomers regulate phenylephrine (PE)-stimulated ERK signaling in cardiac myocytes. This chain is Alpha-1B adrenergic receptor (Adra1b), found in Rattus norvegicus (Rat).